Consider the following 416-residue polypeptide: Major royal jelly protein 8 (416 aa).

The signal sequence occupies residues 1–16; the sequence is MIRWLLLMYLGITCQG. Residues asparagine 24, asparagine 58, asparagine 93, asparagine 115, asparagine 158, asparagine 175, asparagine 196, and asparagine 215 are each glycosylated (N-linked (GlcNAc...) asparagine).

This sequence belongs to the major royal jelly protein family. As to expression, expressed at very low levels in the hypopharyngeal glands of worker honey bees (at protein level). Secreted into bee venom in the sting apparatus (at protein level). Expressed in the spermatheca of adult queen bees (at protein level); expression levels are higher in mated queens than in virgin queens. Along with Mrjp9 expressed at very low levels in the head of worker bees compared to other major royal jelly proteins.

It localises to the secreted. Component of bee sting venom. Component of royal jelly, a substance produced in the hypopharyngeal gland containing proteins, free amino acids, fatty acids, sugars and other nutrients, which is fed to developing larvae by worker nurse bees; may be present only at trace levels. All larvae are fed some royal jelly (also known as worker jelly) early in their development but it forms the principal source of nutrition for larvae destined to become queen bees. Produced in the spermatheca of adult queen bees, along with other major royal jelly proteins, where it may act as a nutrient supply for sperm stored by mated queens, or be involved in energy metabolism. This Apis mellifera (Honeybee) protein is Major royal jelly protein 8.